The chain runs to 863 residues: Ribosomal protein S6 kinase alpha-5 (863 aa).

The segment covering 1-21 has biased composition (gly residues); it reads MEGEGGGSGGAGTSGDSGDGG. Positions 1–22 are disordered; it reads MEGEGGGSGGAGTSGDSGDGGE. One can recognise a Protein kinase 1 domain in the interval 48–317; the sequence is FELLKVLGTG…AEEIKEHLFF (270 aa). Residues 54-62 and lysine 80 contribute to the ATP site; that span reads LGTGAYGKV. The active-site Proton acceptor is the aspartate 176. Serine 211 carries the phosphoserine; by autocatalysis modification. An AGC-kinase C-terminal domain is found at 318–386; it reads EKIKWDDLAA…VAPSILFKRN (69 aa). Serine 359 carries the phosphoserine; by MAPK1, MAPK3 and MAPK14 modification. A phosphoserine; by autocatalysis mark is found at serine 375 and serine 380. In terms of domain architecture, Protein kinase 2 spans 428 to 675; that stretch reads DKPLGEGSFS…SCDLWSLGVI (248 aa). ATP contacts are provided by residues 431–440 and lysine 454; that span reads LGEGSFSICR. Catalysis depends on aspartate 608, which acts as the Proton acceptor. Position 645 is a phosphothreonine; by MAPK1, MAPK3 and MAPK14 (threonine 645). 4 positions are modified to phosphoserine: serine 711, serine 721, serine 755, and serine 759. The residue at position 764 (threonine 764) is a Phosphothreonine. The interval 805–863 is disordered; that stretch reads AKRRKMKRTSTSTETRSSSSESSRSSSSQSHGKTTPTKTLQPSNPTEGSNPDTLFQFSD. The span at 813–832 shows a compositional bias: low complexity; that stretch reads TSTSTETRSSSSESSRSSSS. Phosphoserine; by autocatalysis is present on residues serine 814, serine 816, and serine 822. The span at 833-863 shows a compositional bias: polar residues; sequence QSHGKTTPTKTLQPSNPTEGSNPDTLFQFSD. The residue at position 862 (serine 862) is a Phosphoserine.

The protein belongs to the protein kinase superfamily. AGC Ser/Thr protein kinase family. S6 kinase subfamily. In terms of assembly, forms a complex with either MAPK1/ERK2 or MAPK3/ERK1 in quiescent cells which transiently dissociates following mitogenic stimulation. Also associates with MAPK14/p38-alpha. Activated RPS6KA5 associates with and phosphorylates the NF-kappa-B p65 subunit RELA. Interacts with CREBBP and EP300. Mg(2+) is required as a cofactor. In terms of processing, ser-375 and Thr-645 phosphorylation is required for kinase activity. Ser-375 and Ser-211 are autophosphorylated by the C-terminal kinase domain, and their phosphorylation is essential for the catalytic activity of the N-terminal kinase domain. Phosphorylated at Ser-359, Thr-645 and Thr-764 by MAPK1/ERK2, MAPK3/ERK1 and MAPK14/p38-alpha. Autophosphorylated at Ser-814, Ser-816 and Ser-822 by the N-terminal kinase domain. Post-translationally, ubiquitinated.

Its subcellular location is the nucleus. The enzyme catalyses L-seryl-[protein] + ATP = O-phospho-L-seryl-[protein] + ADP + H(+). It catalyses the reaction L-threonyl-[protein] + ATP = O-phospho-L-threonyl-[protein] + ADP + H(+). With respect to regulation, activated by phosphorylation at Ser-359, Thr-645 and Thr-764 by MAPK1/ERK2, MAPK3/ERK1 and MAPK14/p38-alpha, and by further autophosphorylation of Ser-211, Ser-375 and Ser-380 by the activated C-terminal kinase domain. The active N-terminal kinase domain finally phosphorylates downstream substrates, as well as Ser-814, Ser-816 and Ser-822 in its own C-terminal region. Functionally, serine/threonine-protein kinase that is required for the mitogen or stress-induced phosphorylation of the transcription factors CREB1 and ATF1 and for the regulation of the transcription factors RELA, STAT3 and ETV1/ER81, and that contributes to gene activation by histone phosphorylation and functions in the regulation of inflammatory genes. Phosphorylates CREB1 and ATF1 in response to mitogenic or stress stimuli such as UV-C irradiation, epidermal growth factor (EGF) and anisomycin. Plays an essential role in the control of RELA transcriptional activity in response to TNF and upon glucocorticoid, associates in the cytoplasm with the glucocorticoid receptor NR3C1 and contributes to RELA inhibition and repression of inflammatory gene expression. In skeletal myoblasts is required for phosphorylation of RELA at 'Ser-276' during oxidative stress. In erythropoietin-stimulated cells, is necessary for the 'Ser-727' phosphorylation of STAT3 and regulation of its transcriptional potential. Phosphorylates ETV1/ER81 at 'Ser-191' and 'Ser-216', and thereby regulates its ability to stimulate transcription, which may be important during development and breast tumor formation. Directly represses transcription via phosphorylation of 'Ser-1' of histone H2A. Phosphorylates 'Ser-10' of histone H3 in response to mitogenics, stress stimuli and EGF, which results in the transcriptional activation of several immediate early genes, including proto-oncogenes c-fos/FOS and c-jun/JUN. May also phosphorylate 'Ser-28' of histone H3. Mediates the mitogen- and stress-induced phosphorylation of high mobility group protein 1 (HMGN1/HMG14). In lipopolysaccharide-stimulated primary macrophages, acts downstream of the Toll-like receptor TLR4 to limit the production of pro-inflammatory cytokines. Functions probably by inducing transcription of the MAP kinase phosphatase DUSP1 and the anti-inflammatory cytokine interleukin 10 (IL10), via CREB1 and ATF1 transcription factors. Plays a role in neuronal cell death by mediating the downstream effects of excitotoxic injury. Phosphorylates TRIM7 at 'Ser-106' in response to growth factor signaling via the MEK/ERK pathway, thereby stimulating its ubiquitin ligase activity. The polypeptide is Ribosomal protein S6 kinase alpha-5 (Rps6ka5) (Mus musculus (Mouse)).